The following is a 540-amino-acid chain: uncharacterized protein (540 aa).

A signal peptide spans 1 to 20 (MSVSYRGPRWSSFVHVSQHS).

Belongs to the TP096X family.

This is an uncharacterized protein from Treponema pallidum (strain Nichols).